A 482-amino-acid polypeptide reads, in one-letter code: 3-isopropylmalate dehydratase large subunit (482 aa).

3 residues coordinate [4Fe-4S] cluster: Cys353, Cys414, and Cys417.

This sequence belongs to the aconitase/IPM isomerase family. LeuC type 1 subfamily. In terms of assembly, heterodimer of LeuC and LeuD. The cofactor is [4Fe-4S] cluster.

The enzyme catalyses (2R,3S)-3-isopropylmalate = (2S)-2-isopropylmalate. Its pathway is amino-acid biosynthesis; L-leucine biosynthesis; L-leucine from 3-methyl-2-oxobutanoate: step 2/4. Its function is as follows. Catalyzes the isomerization between 2-isopropylmalate and 3-isopropylmalate, via the formation of 2-isopropylmaleate. This Xanthomonas oryzae pv. oryzae (strain MAFF 311018) protein is 3-isopropylmalate dehydratase large subunit.